A 155-amino-acid polypeptide reads, in one-letter code: Ribosomal RNA large subunit methyltransferase H (155 aa).

Residues Leu-72, Gly-103, and 122–127 contribute to the S-adenosyl-L-methionine site; that span reads LSDLTL.

It belongs to the RNA methyltransferase RlmH family. Homodimer.

Its subcellular location is the cytoplasm. The enzyme catalyses pseudouridine(1915) in 23S rRNA + S-adenosyl-L-methionine = N(3)-methylpseudouridine(1915) in 23S rRNA + S-adenosyl-L-homocysteine + H(+). Specifically methylates the pseudouridine at position 1915 (m3Psi1915) in 23S rRNA. The protein is Ribosomal RNA large subunit methyltransferase H of Verminephrobacter eiseniae (strain EF01-2).